The sequence spans 201 residues: Recombination protein RecR (201 aa).

A C4-type zinc finger spans residues 57–72 (CTHCRTFTEEESCAIC). A Toprim domain is found at 81 to 176 (GFLCVVEQPS…KVSRIAHGIP (96 aa)).

This sequence belongs to the RecR family.

Its function is as follows. May play a role in DNA repair. It seems to be involved in an RecBC-independent recombinational process of DNA repair. It may act with RecF and RecO. The polypeptide is Recombination protein RecR (Histophilus somni (strain 2336) (Haemophilus somnus)).